We begin with the raw amino-acid sequence, 39 residues long: U1-nemetoxin-Csp1c (39 aa).

4 disulfides stabilise this stretch: Cys-1–Cys-15, Cys-8–Cys-19, Cys-14–Cys-36, and Cys-25–Cys-32.

As to expression, expressed by the venom gland.

Its subcellular location is the secreted. In terms of biological role, causes paralysis to insect larvae (H.virescens). This toxin is active only on insects. This chain is U1-nemetoxin-Csp1c, found in Calisoga sp. (Spider).